The sequence spans 161 residues: DNA-binding protein inhibitor ID-4 (161 aa).

The 53-residue stretch at 52–104 (AAEAAADEPALCLQCDMNDCYSRLRRLVPTIPPNKKVSKVEILQHVIDYILDL) folds into the bHLH domain. Over residues 117-126 (QPPPPAPPHH) the composition is skewed to pro residues. The segment at 117–161 (QPPPPAPPHHPAGTCPAAPPRTPLTALNTDPAGAVNKQGDSILCR) is disordered.

Heterodimer with other HLH proteins.

The protein resides in the nucleus. In terms of biological role, transcriptional regulator (lacking a basic DNA binding domain) which negatively regulates the basic helix-loop-helix (bHLH) transcription factors by forming heterodimers and inhibiting their DNA binding and transcriptional activity. Implicated in regulating a variety of cellular processes, including cellular growth, senescence, differentiation, apoptosis, angiogenesis, and neoplastic transformation. The protein is DNA-binding protein inhibitor ID-4 (ID4) of Homo sapiens (Human).